A 153-amino-acid chain; its full sequence is MSALPPQPPPPLLLLLLALLAAPAALARRAESASASQPEAEHQPPPGPGNATQLGSGMAGGGSSNSSVDAVVTRISSLLRDLPTLKATVIVACAFSALLIACLLLRVFRLGKRLKKTRKYDIITTPAERVEMAPLNEEDDEDEDSTVFDIKYR.

An N-terminal signal peptide occupies residues 1–27; it reads MSALPPQPPPPLLLLLLALLAAPAALA. The Extracellular portion of the chain corresponds to 28–84; it reads RRAESASASQPEAEHQPPPGPGNATQLGSGMAGGGSSNSSVDAVVTRISSLLRDLPT. The segment at 31–67 is disordered; it reads ESASASQPEAEHQPPPGPGNATQLGSGMAGGGSSNSS. A glycan (N-linked (GlcNAc...) asparagine) is linked at asparagine 50. The helical transmembrane segment at 85–105 threads the bilayer; sequence LKATVIVACAFSALLIACLLL. At 106 to 153 the chain is on the cytoplasmic side; the sequence is RVFRLGKRLKKTRKYDIITTPAERVEMAPLNEEDDEDEDSTVFDIKYR.

The protein belongs to the FAM174 family.

It localises to the cell membrane. It is found in the golgi apparatus. In terms of biological role, essential for Golgi structural integrity. This Mus musculus (Mouse) protein is Membrane protein FAM174B (Fam174b).